A 342-amino-acid chain; its full sequence is Isopentenyl-diphosphate delta-isomerase (342 aa).

Substrate is bound at residue 11–12 (RK). FMN-binding positions include S68, 69–71 (SMT), S99, and N127. Substrate is bound at residue 99 to 101 (SMR). Substrate is bound at residue Q162. E163 contacts Mg(2+). Residues K194, T224, 274–276 (GLK), and 295–296 (AG) contribute to the FMN site.

It belongs to the IPP isomerase type 2 family. Homooctamer. Dimer of tetramers. FMN is required as a cofactor. NADPH serves as cofactor. The cofactor is Mg(2+).

Its subcellular location is the cytoplasm. The enzyme catalyses isopentenyl diphosphate = dimethylallyl diphosphate. Involved in the biosynthesis of isoprenoids. Catalyzes the 1,3-allylic rearrangement of the homoallylic substrate isopentenyl (IPP) to its allylic isomer, dimethylallyl diphosphate (DMAPP). The protein is Isopentenyl-diphosphate delta-isomerase of Rickettsia peacockii (strain Rustic).